Reading from the N-terminus, the 63-residue chain is Large ribosomal subunit protein bL35 (63 aa).

It belongs to the bacterial ribosomal protein bL35 family.

The sequence is that of Large ribosomal subunit protein bL35 from Thermobifida fusca (strain YX).